The following is a 477-amino-acid chain: POC1 centriolar protein homolog B (477 aa).

WD repeat units lie at residues 16 to 55, 58 to 97, 100 to 139, 142 to 181, 183 to 223, 226 to 265, and 268 to 307; these read GHKA…RAYR, GHKD…KSSE, AHTA…FLYS, RHTH…CVNN, SDSV…LLQH, VHSC…LIYT, and GHTG…VHYR. Residues 449–469 adopt a coiled-coil conformation; sequence EQRLSLTEDKLKDCLENQQKL.

It belongs to the WD repeat POC1 family. In terms of assembly, interacts with POC1A. Interacts with FAM161A. Interacts with CEP44; the interaction is direct and recruits POC1B to centriolar microtubules. Forms a microtubule-associated complex with POC5, CETN2 and FAM161A. Interacts with CCDC15. Post-translationally, phosphorylated in mitotic cells that may be mediated by CDK1.

It is found in the cytoplasm. The protein resides in the cytoskeleton. Its subcellular location is the microtubule organizing center. It localises to the centrosome. The protein localises to the centriole. It is found in the cilium basal body. The protein resides in the spindle pole. Plays an important role in centriole assembly and/or stability and ciliogenesis. Involved in early steps of centriole duplication, as well as in the later steps of centriole length control. Acts in concert with POC1A to ensure centriole integrity and proper mitotic spindle formation. Required for primary cilia formation, ciliary length and also cell proliferation. Required for retinal integrity. Acts as a positive regulator of centriole elongation. This Rattus norvegicus (Rat) protein is POC1 centriolar protein homolog B (Poc1b).